A 143-amino-acid chain; its full sequence is Nucleoside diphosphate kinase (143 aa).

K11, F59, R87, T93, R104, and N114 together coordinate ATP. The Pros-phosphohistidine intermediate role is filled by H117.

It belongs to the NDK family. As to quaternary structure, homotetramer. Mg(2+) serves as cofactor.

It localises to the cytoplasm. The enzyme catalyses a 2'-deoxyribonucleoside 5'-diphosphate + ATP = a 2'-deoxyribonucleoside 5'-triphosphate + ADP. The catalysed reaction is a ribonucleoside 5'-diphosphate + ATP = a ribonucleoside 5'-triphosphate + ADP. Functionally, major role in the synthesis of nucleoside triphosphates other than ATP. The ATP gamma phosphate is transferred to the NDP beta phosphate via a ping-pong mechanism, using a phosphorylated active-site intermediate. The protein is Nucleoside diphosphate kinase of Shewanella amazonensis (strain ATCC BAA-1098 / SB2B).